Reading from the N-terminus, the 419-residue chain is Zinc finger protein Pegasus (419 aa).

Lys5 participates in a covalent cross-link: Glycyl lysine isopeptide (Lys-Gly) (interchain with G-Cter in SUMO2). 3 consecutive C2H2-type zinc fingers follow at residues 82–104 (LKCRYCNYASKGTARLIEHIRIH), 110–132 (HRCHLCPFASAYERHLEAHMRSH), and 138–161 (YKCELCSFRCSDRSNLSHHRRRKH). Lys185 participates in a covalent cross-link: Glycyl lysine isopeptide (Lys-Gly) (interchain with G-Cter in SUMO2). A compositionally biased stretch (polar residues) spans 223–236 (QTDSYESMAKTTPT). Disordered regions lie at residues 223 to 245 (QTDSYESMAKTTPTGGLPRDPQE) and 288 to 356 (MQQP…PTLP). The span at 289–311 (QQPSAQAVVSAVSASLPQSSSPA) shows a compositional bias: low complexity. Polar residues predominate over residues 332 to 349 (SEPSAHTSTPSMGNSQPS). 2 consecutive C2H2-type zinc fingers follow at residues 364–386 (HHCQHCDMYFADNILYTIHMGCH) and 392–416 (FQCNICGCKCKNKYDFACHFARGQH).

Belongs to the Ikaros C2H2-type zinc-finger protein family. As to quaternary structure, self-associates. Interacts with other family members; IKZF1, IKZF2, IKZF3 and IKZF4.

The protein resides in the nucleus. Functionally, transcriptional repressor that binds the core 5'GNNTGTNG-3' DNA consensus sequence. Involved in megakaryocyte differentiation. The sequence is that of Zinc finger protein Pegasus (IKZF5) from Bos taurus (Bovine).